The following is a 279-amino-acid chain: Tryptophan synthase alpha chain (279 aa).

Active-site proton acceptor residues include Glu50 and Asp61.

The protein belongs to the TrpA family. In terms of assembly, tetramer of two alpha and two beta chains.

The catalysed reaction is (1S,2R)-1-C-(indol-3-yl)glycerol 3-phosphate + L-serine = D-glyceraldehyde 3-phosphate + L-tryptophan + H2O. The protein operates within amino-acid biosynthesis; L-tryptophan biosynthesis; L-tryptophan from chorismate: step 5/5. Functionally, the alpha subunit is responsible for the aldol cleavage of indoleglycerol phosphate to indole and glyceraldehyde 3-phosphate. This chain is Tryptophan synthase alpha chain, found in Rhizobium etli (strain ATCC 51251 / DSM 11541 / JCM 21823 / NBRC 15573 / CFN 42).